Here is a 147-residue protein sequence, read N- to C-terminus: Large ribosomal subunit protein uL16c (147 aa).

Basic residues predominate over residues 1-17 (MLSPKRTRFRKQHRGRM). The segment at 1–20 (MLSPKRTRFRKQHRGRMKGI) is disordered.

It belongs to the universal ribosomal protein uL16 family. In terms of assembly, part of the 50S ribosomal subunit.

It is found in the plastid. Its subcellular location is the chloroplast. This chain is Large ribosomal subunit protein uL16c, found in Ipomoea purpurea (Common morning glory).